A 195-amino-acid chain; its full sequence is Segregation and condensation protein B (195 aa).

The protein belongs to the ScpB family. As to quaternary structure, homodimer. Homodimerization may be required to stabilize the binding of ScpA to the Smc head domains. Component of a cohesin-like complex composed of ScpA, ScpB and the Smc homodimer, in which ScpA and ScpB bind to the head domain of Smc. The presence of the three proteins is required for the association of the complex with DNA.

Its subcellular location is the cytoplasm. Participates in chromosomal partition during cell division. May act via the formation of a condensin-like complex containing Smc and ScpA that pull DNA away from mid-cell into both cell halves. In Clostridium perfringens (strain SM101 / Type A), this protein is Segregation and condensation protein B.